The primary structure comprises 313 residues: Trimeric intracellular cation channel type 1B.2 (313 aa).

Topologically, residues 1–28 (MGWVPDEWSIDHDTLIDAGGYVQKLKLY) are lumenal. Residues 29–48 (PYFDAAHYVLTCLSVRHDLG) traverse the membrane as a helical segment. Residues 49-57 (PDAISFSRK) are Cytoplasmic-facing. A discontinuously helical membrane pass occupies residues 58–82 (HPFSCWLSCMLMSFAGSFLSCFLLG). Topologically, residues 83 to 90 (EPIISPLK) are lumenal. The chain crosses the membrane as a helical span at residues 91–108 (QHADILLGSIVWYLVFYS). The Cytoplasmic portion of the chain corresponds to 109–118 (PFDVVFRLAT). A helical membrane pass occupies residues 119–149 (WFPVKLGLSVLKEVQRTHKIAAGVKHAVRIY). The a 1,2-diacyl-sn-glycero-3-phospho-(1D-myo-inositol-4,5-bisphosphate) site is built by lysine 130 and arginine 134. Residues 150–151 (PE) lie on the Lumenal side of the membrane. The chain crosses the membrane as a discontinuously helical span at residues 152–178 (SYLVQILVGVAKGAGSGVVKIVEQLAR). Glycine 168 provides a ligand contact to a 1,2-diacyl-sn-glycero-3-phospho-(1D-myo-inositol-4,5-bisphosphate). The Cytoplasmic portion of the chain corresponds to 179-192 (GTWHPTNHEILRPS). A helical membrane pass occupies residues 193–210 (FTTKACVIASIVFTLERH). At 211-216 (SMYVTA) the chain is on the lumenal side. Residues 217 to 239 (PHDLVYLCVVGFFIYFKLASLCL) traverse the membrane as a helical segment. The Cytoplasmic portion of the chain corresponds to 240-313 (SVHDVLMPIE…MSNGTDKKNN (74 aa)).

The protein belongs to the TMEM38 family. Homotrimer; trimerization probably requires binding to phosphatidylinositol 4,5-bisphosphate (PIP2).

It is found in the endoplasmic reticulum membrane. In terms of biological role, potassium channel that mediates transmembrane potassium transport. Might be required for maintenance of rapid intracellular calcium release. May act as a potassium counter-ion channel that functions in synchronization with calcium release from intracellular stores. Binds phosphatidylinositol 4,5-bisphosphate (PIP2). In Caenorhabditis elegans, this protein is Trimeric intracellular cation channel type 1B.2.